A 692-amino-acid polypeptide reads, in one-letter code: Glycine--tRNA ligase beta subunit (692 aa).

This sequence belongs to the class-II aminoacyl-tRNA synthetase family. In terms of assembly, tetramer of two alpha and two beta subunits.

It is found in the cytoplasm. It carries out the reaction tRNA(Gly) + glycine + ATP = glycyl-tRNA(Gly) + AMP + diphosphate. In Pseudoalteromonas atlantica (strain T6c / ATCC BAA-1087), this protein is Glycine--tRNA ligase beta subunit.